We begin with the raw amino-acid sequence, 116 residues long: Large ribosomal subunit protein uL24 (116 aa).

The protein belongs to the universal ribosomal protein uL24 family. As to quaternary structure, part of the 50S ribosomal subunit.

One of two assembly initiator proteins, it binds directly to the 5'-end of the 23S rRNA, where it nucleates assembly of the 50S subunit. Functionally, one of the proteins that surrounds the polypeptide exit tunnel on the outside of the subunit. The protein is Large ribosomal subunit protein uL24 of Protochlamydia amoebophila (strain UWE25).